A 992-amino-acid chain; its full sequence is MGMRSAARMPKLTRRSRILIMIALGVIVLLLAGPRLIDAYVDWLWFGELGYRSVFTTMLATRIVVCLVAGVVVGGIVFGGLALAYRTRPVFVPDADNDPVARYRAVVLARLRLVGIGIPAAIGLLAGIVAQSYWARIQLFLHGGDFGVRDPQFGRDLGFYAFELPFYRLMLSYMLVSVFLAFVANLVAHYIFGGIRLSGRTGALSRSARVQLVSLVGVLVLLKAVAYWLDRYELLSHTRGGKPFTGAGYTDINAVLPAKLILMAIALICAAAVFSAIALRDLRIPAIGLVLLLLSSLIVGAGWPLIVEQISVKPNAAQKESEYISRSITATRQAYGLTSDVVTYRNYSGDSPATAEQVAADRATTSNIRLLDPTIVSPAFTQFQQGKNFYYFPDQLSIDRYLDRNGNLRDYVVAARELNPDRLIDNQRDWINRHTVYTHGNGFIASPANTVRGIANDPNQNGGYPEFLVNVVGANGTVVSDGPAPLDQPRIYFGPVISNTSADYAIVGRNGDDREYDYETNIDTKRYTYTGSGGVPLGGWLARSVFAAKFAERNFLFSNVIGSNSKILFNRDPAQRVEAVAPWLTTDSAVYPAIVNKRLVWIVDGYTTLDNYPYSELTSLSSATADSNEVAFNRLVPDKKVSYIRNSVKATVDAYDGTVTLYQQDEKDPVLKAWMQVFPGTVKPKSDIAPELAEHLRYPEDLFKVQRMLLAKYHVNDPVTFFSTSDFWDVPLDPNPTASSYQPPYYIVAKNIAKDDNSASYQLISAMNRFKRDYLAAYISASSDPATYGNLTVLTIPGQVNGPKLANNAITTDPAVSQDLGVIGRDNQNRIRWGNLLTLPVAQGGLLYVEPVYASPGASDAASSYPRLIRVAMMYNDKVGYGPTVRDALTGLFGPGAGATATGIAPTEAAVPPSPAANPPPPASGPQPPPVTAAPPVPVGAVTLSPAKVAALQEIQAAIGAARDAQKKGDFAAYGSALQRLDEAITKFNDAG.

7 helical membrane-spanning segments follow: residues 18 to 38, 63 to 83, 113 to 133, 175 to 195, 210 to 230, 259 to 279, and 287 to 307; these read ILIM…RLID, IVVC…GLAL, LVGI…AQSY, LVSV…FGGI, VQLV…YWLD, KLIL…AIAL, and IGLV…PLIV. Residues 906 to 938 are disordered; the sequence is PTEAAVPPSPAANPPPPASGPQPPPVTAAPPVP. Pro residues predominate over residues 912-938; that stretch reads PPSPAANPPPPASGPQPPPVTAAPPVP.

The protein belongs to the UPF0182 family.

It localises to the cell membrane. The protein is UPF0182 protein BCG_3215c of Mycobacterium bovis (strain BCG / Pasteur 1173P2).